A 486-amino-acid polypeptide reads, in one-letter code: ATP synthase subunit beta (486 aa).

Gly-170–Thr-177 contacts ATP.

It belongs to the ATPase alpha/beta chains family. In terms of assembly, F-type ATPases have 2 components, CF(1) - the catalytic core - and CF(0) - the membrane proton channel. CF(1) has five subunits: alpha(3), beta(3), gamma(1), delta(1), epsilon(1). CF(0) has three main subunits: a(1), b(2) and c(9-12). The alpha and beta chains form an alternating ring which encloses part of the gamma chain. CF(1) is attached to CF(0) by a central stalk formed by the gamma and epsilon chains, while a peripheral stalk is formed by the delta and b chains.

Its subcellular location is the cell membrane. It carries out the reaction ATP + H2O + 4 H(+)(in) = ADP + phosphate + 5 H(+)(out). Produces ATP from ADP in the presence of a proton gradient across the membrane. The catalytic sites are hosted primarily by the beta subunits. This Clavibacter michiganensis subsp. michiganensis (strain NCPPB 382) protein is ATP synthase subunit beta.